Here is a 489-residue protein sequence, read N- to C-terminus: Lysine--tRNA ligase (489 aa).

Positions 399 and 406 each coordinate Mg(2+).

Belongs to the class-II aminoacyl-tRNA synthetase family. As to quaternary structure, homodimer. The cofactor is Mg(2+).

Its subcellular location is the cytoplasm. It catalyses the reaction tRNA(Lys) + L-lysine + ATP = L-lysyl-tRNA(Lys) + AMP + diphosphate. The protein is Lysine--tRNA ligase of Malacoplasma penetrans (strain HF-2) (Mycoplasma penetrans).